The sequence spans 982 residues: ATP-dependent DNA helicase Q5 (982 aa).

Residues 39-213 (MAVVKGAEDV…FAALHLKQPV (175 aa)) enclose the Helicase ATP-binding domain. 52 to 59 (MPTGAGKS) contacts ATP. The short motif at 157–160 (DEAH) is the DEAH box element. Residues 241–398 (NLRDFCLKAL…NKPSDKATLL (158 aa)) enclose the Helicase C-terminal domain. Cysteine 412, cysteine 428, cysteine 432, and cysteine 435 together coordinate Zn(2+). Serine 489 and serine 492 each carry phosphoserine. Residues 491–621 (GSGDEGRDEA…ASKDGQLYDM (131 aa)) are interaction with POLR2A. Phosphothreonine is present on threonine 527. The tract at residues 653–726 (PKRVGAGFSK…ALGSSVNCGD (74 aa)) is interaction with RAD51. Disordered regions lie at residues 675 to 797 (GKSH…PGKC) and 812 to 893 (QTEG…AQEP). Serine 728 carries the post-translational modification Phosphoserine; by CDK1.

Belongs to the helicase family. RecQ subfamily. As to quaternary structure, monomer. Interacts with TOP2A, TOP3A and TOP3B. Interacts with RNA polymerase II subunit POLR2A. Identified in a complex with the RNA polymerase II core bound to DNA. Interacts with RAD51. Interacts with WRN; this interaction stimulates WRN helicase activity on DNA fork duplexes. Interacts with MUS1; this interaction promotes MUS81-dependent mitotic DNA synthesis. Zn(2+) is required as a cofactor. In terms of processing, phosphorylated by CDK1 at Ser-728; this phosphorylation is required for RECQL5-mediated disruption of RAD51 filaments on stalled replication forks.

Its subcellular location is the nucleus. The protein localises to the nucleoplasm. The enzyme catalyses Couples ATP hydrolysis with the unwinding of duplex DNA by translocating in the 3'-5' direction.. It catalyses the reaction ATP + H2O = ADP + phosphate + H(+). Its function is as follows. DNA helicase that plays an important role in DNA replication, transcription and repair. Binds to the RNA polymerase II subunit POLR2A during transcription elongation and suppresses transcription-associated genomic instability. Also associates with POLR1A and enforces the stability of ribosomal DNA arrays. Plays an important role in mitotic chromosome separation after cross-over events and cell cycle progress. Mechanistically, removes RAD51 filaments protecting stalled replication forks at common fragile sites and stimulates MUS81-EME1 endonuclease leading to mitotic DNA synthesis. Required for efficient DNA repair, including repair of inter-strand cross-links. Stimulates DNA decatenation mediated by TOP2A. Prevents sister chromatid exchange and homologous recombination. The sequence is that of ATP-dependent DNA helicase Q5 (Recql5) from Mus musculus (Mouse).